Here is a 173-residue protein sequence, read N- to C-terminus: Pathogenesis-related protein 1A/1B (173 aa).

The N-terminal stretch at 1–20 (MSTSAVLFLLLAVFAAGASA) is a signal peptide.

The protein belongs to the thaumatin family.

This is Pathogenesis-related protein 1A/1B from Hordeum vulgare (Barley).